A 505-amino-acid polypeptide reads, in one-letter code: ATP-dependent RNA helicase HAS1 (505 aa).

The disordered stretch occupies residues 1–37 (MATPSNKRSRDSESTEEPVVDEKSTSKQNNAAPEGEQ). S12 bears the Phosphoserine mark. Polar residues predominate over residues 26–37 (SKQNNAAPEGEQ). The Q motif signature appears at 42-70 (EKFEELKLSQPTLKAIEKMGFTTMTSVQA). The region spanning 73–249 (IPPLLAGRDV…RISLRPGPLF (177 aa)) is the Helicase ATP-binding domain. Residue 86 to 93 (AKTGSGKT) participates in ATP binding. The DEAD box motif lies at 196–199 (DEAD). In terms of domain architecture, Helicase C-terminal spans 263–433 (GLEQGYVVCD…NVQSQLEKLI (171 aa)). The Bipartite nuclear localization signal signature appears at 275–291 (KRFLLLFSFLKRNQKKK).

Belongs to the DEAD box helicase family. DDX18/HAS1 subfamily. As to quaternary structure, interacts with RRP1. Associates in the nucleolus with the 60S and pre-60S ribosomal subunits. It has also been isolated with the nuclear pore complex. In terms of processing, phosphorylated by CDK1.

It is found in the nucleus. It localises to the nucleolus. It carries out the reaction ATP + H2O = ADP + phosphate + H(+). Functionally, ATP-dependent RNA helicase involved in 40S ribosomal subunit biogenesis. Required for the processing and cleavage of 35S pre-rRNA at sites A0, A1, and A2, leading to mature 18S rRNA. The chain is ATP-dependent RNA helicase HAS1 (HAS1) from Saccharomyces cerevisiae (strain ATCC 204508 / S288c) (Baker's yeast).